Here is a 91-residue protein sequence, read N- to C-terminus: DNA-binding protein HU (91 aa).

This sequence belongs to the bacterial histone-like protein family. In terms of assembly, homodimer.

In terms of biological role, histone-like DNA-binding protein which is capable of wrapping DNA to stabilize it, and thus to prevent its denaturation under extreme environmental conditions. The polypeptide is DNA-binding protein HU (hup) (Streptococcus thermophilus).